The following is a 251-amino-acid chain: Probable metal-binding protein YrpE (251 aa).

An N-terminal signal peptide occupies residues 1 to 30 (MNILFSKRLGILTIGSLLVLAGCQTSGSSA). Residues 25–41 (TSGSSAGESNQTTSSSA) are compositionally biased toward polar residues. The disordered stretch occupies residues 25 to 72 (TSGSSAGESNQTTSSSAVEEDSSKTQEQTSDSHTHEHSHDHSHAHDEE). The span at 54–72 (SDSHTHEHSHDHSHAHDEE) shows a compositional bias: basic and acidic residues. Residues histidine 203, histidine 212, histidine 214, glutamate 247, and histidine 251 each coordinate Zn(2+).

It belongs to the calycin superfamily. ZinT family.

This chain is Probable metal-binding protein YrpE (yrpE), found in Bacillus subtilis (strain 168).